The following is a 212-amino-acid chain: Octanoyltransferase (212 aa).

Residues 33 to 212 (GTAPELVWLL…ATFPEVFGAD (180 aa)) form the BPL/LPL catalytic domain. Substrate-binding positions include 72–79 (RGGQYTYH), 144–146 (AIG), and 157–159 (GIA). C175 acts as the Acyl-thioester intermediate in catalysis.

It belongs to the LipB family.

It is found in the cytoplasm. The catalysed reaction is octanoyl-[ACP] + L-lysyl-[protein] = N(6)-octanoyl-L-lysyl-[protein] + holo-[ACP] + H(+). The protein operates within protein modification; protein lipoylation via endogenous pathway; protein N(6)-(lipoyl)lysine from octanoyl-[acyl-carrier-protein]: step 1/2. In terms of biological role, catalyzes the transfer of endogenously produced octanoic acid from octanoyl-acyl-carrier-protein onto the lipoyl domains of lipoate-dependent enzymes. Lipoyl-ACP can also act as a substrate although octanoyl-ACP is likely to be the physiological substrate. The chain is Octanoyltransferase from Paramagnetospirillum magneticum (strain ATCC 700264 / AMB-1) (Magnetospirillum magneticum).